The sequence spans 281 residues: Pantothenate synthetase (281 aa).

ATP is bound at residue 30-37; the sequence is MGNLHQGH. The active-site Proton donor is the His37. Gln61 serves as a coordination point for (R)-pantoate. Gln61 serves as a coordination point for beta-alanine. 149 to 152 is a binding site for ATP; sequence GNKD. A (R)-pantoate-binding site is contributed by Gln155. Residues Ile178 and 186–189 each bind ATP; that span reads MSSR.

Belongs to the pantothenate synthetase family. As to quaternary structure, homodimer.

The protein resides in the cytoplasm. It catalyses the reaction (R)-pantoate + beta-alanine + ATP = (R)-pantothenate + AMP + diphosphate + H(+). Its pathway is cofactor biosynthesis; (R)-pantothenate biosynthesis; (R)-pantothenate from (R)-pantoate and beta-alanine: step 1/1. In terms of biological role, catalyzes the condensation of pantoate with beta-alanine in an ATP-dependent reaction via a pantoyl-adenylate intermediate. This chain is Pantothenate synthetase, found in Shewanella baltica (strain OS185).